Here is a 212-residue protein sequence, read N- to C-terminus: MSANNGWEPRTRLGKQVVEGEIDSMQEALNSGLPLKESEVVDQLVPDLEDEVLDINMVQRMTDSGRRVKFRCVVAVGNRDGLIGYAEGRDDQVGGAIQKAIDIAKLNIIDVSRGCGSWECGCGRPHTVALRTEGKAGSVEVELQPAPRGLGLAGGETVRKVLELAGIEDIWTRSSGNTRTTVNFAKATFNALQNTAEARVPERTFEKREVIE.

The 64-residue stretch at 48-111 (LEDEVLDINM…DIAKLNIIDV (64 aa)) folds into the S5 DRBM domain.

This sequence belongs to the universal ribosomal protein uS5 family. Part of the 30S ribosomal subunit. Contacts protein S4.

Functionally, with S4 and S12 plays an important role in translational accuracy. This is Small ribosomal subunit protein uS5 from Haloarcula marismortui (strain ATCC 43049 / DSM 3752 / JCM 8966 / VKM B-1809) (Halobacterium marismortui).